The primary structure comprises 105 residues: MVNNVTDISFKNEVLESDLPVIVDFWAEWCGPCKMLIPIIDEISKELQDKVKVLKMNIDENPKTPSEYGVRSIPTIMLFKNGEQKDTKIGLQQKKSLLDWINKSI.

In terms of domain architecture, Thioredoxin spans Met1–Ile105. A disulfide bridge links Cys30 with Cys33.

Belongs to the thioredoxin family.

Component of the thioredoxin-thioredoxin reductase system. Participates in various redox reactions through the reversible oxidation of its active center dithiol to a disulfide and catalyzes dithiol-disulfide exchange reactions. The protein is Thioredoxin (trxA) of Rickettsia typhi (strain ATCC VR-144 / Wilmington).